A 453-amino-acid polypeptide reads, in one-letter code: Trigger factor (453 aa).

The 86-residue stretch at 171 to 256 folds into the PPIase FKBP-type domain; the sequence is GDRVTISFKG…ATVLEAPQES (86 aa).

Belongs to the FKBP-type PPIase family. Tig subfamily.

The protein localises to the cytoplasm. The catalysed reaction is [protein]-peptidylproline (omega=180) = [protein]-peptidylproline (omega=0). Involved in protein export. Acts as a chaperone by maintaining the newly synthesized protein in an open conformation. Functions as a peptidyl-prolyl cis-trans isomerase. The sequence is that of Trigger factor from Rhodopseudomonas palustris (strain BisB18).